The primary structure comprises 916 residues: Rab3 GTPase-activating protein catalytic subunit (916 aa).

A disordered region spans residues 530-574 (NSKRKSEGMVGKASSEEEEDEDDDEGEFFDCDDLTAGAGSPTKAV). S543 and S544 each carry phosphoserine. A compositionally biased stretch (acidic residues) spans 545–562 (EEEEDEDDDEGEFFDCDD).

It belongs to the Rab3-GAP catalytic subunit family. The Rab3 GTPase-activating complex is a heterodimer composed of Rab3GAP1 and Rab3-GAP.

Its subcellular location is the cytoplasm. Its function is as follows. Catalytic subunit of the Rab3 GTPase-activating (Rab3GAP) complex composed of Rab3-GAP and Rab3GAP1, which has both GTPase-activating protein (GAP) activity towards Rab3, and guanine nucleotide exchange factor (GEF) activity towards Rab18. As part of the Rab3GAP complex, required for the rapid induction and sustained expression of synaptic homeostasis at the neuromuscular junction (NMJ). Also participates in the regulation of autophagy in tissues such as larval fat cells and adult muscles. The Rab3GAP complex, acts as a GAP for Rab3 by converting active Rab3-GTP to the inactive form Rab3-GDP. At the neuromuscular junction (NMJ), forms a presynaptic signaling mechanism with Rab3 that regulates progression of synaptic homeostasis at a late stage of vesicle release. Within this mechanism Rab3-GTP acts, directly or indirectly, to inhibit the progression of synaptic homeostasis, and Rab3-GAP functions to inactivate this action of Rab3-GTP. The Rab3GAP complex, acts as a GEF for Rab18 by promoting the conversion of inactive Rab18-GDP to the active form Rab18-GTP. Regulates autophagy as part of a Rab3GAP-Rab18 module. Once Rab18 is activated by the GEF Rab3GAP complex, the Rab3GAP-Rab18 module localizes to autophagosomes, and regulates autolysosome formation and maturation together with the Rab18 interacting effector, the PI3K/Vps34 Complex I. In Drosophila melanogaster (Fruit fly), this protein is Rab3 GTPase-activating protein catalytic subunit.